The primary structure comprises 500 residues: MANKKIRVRYAPSPTGHLHIGNARTALFNYLFARHNKGTLVLRIEDADTERNVEGGAESQIENLHWLGIDWDEGPDIGGDYGPYKQSERKDIYQKYIDQLLEEGKAYYSFKTEEELEAQREEQRAMGIAPHYVYEYEGMTTDEIKQAQAEARAKGLKPVVRIHIPEGVTYEWDDIVKGHLSFESDTIGGDFVIQKRDGMPTYNFAVVIDDHLMEISHVLRGDDHISNTPKQLCVYEALGWEAPVFGHMTLIINSATGKKLSKRDESVLQFIEQYRELVSCQKPCSTSSSLLGWSPVGESEIFSKREFIKQFDPARLSKSPAAFDQKKLDWVNNQYMKTADRDELLDLALHNLQEAGLVEANPAPGKMEWVRQLVNMYANQMSYTKQIVDLSKIFFTEAKYLTDEEVEEIKKDEARPAIEEFKKQLDKLDNFTAKKIMGAIMATRRETGIKGRKLFMPIRIATTRSMVGPGIGEAMELMGKDTVMKHLDLTLKQLSEAGIE.

Positions P12–N22 match the 'HIGH' region motif. The 'KMSKS' region motif lies at K259 to R263. K262 contributes to the ATP binding site.

The protein belongs to the class-I aminoacyl-tRNA synthetase family. Glutamate--tRNA ligase type 1 subfamily. As to quaternary structure, monomer.

Its subcellular location is the cytoplasm. It catalyses the reaction tRNA(Glu) + L-glutamate + ATP = L-glutamyl-tRNA(Glu) + AMP + diphosphate. In terms of biological role, catalyzes the attachment of glutamate to tRNA(Glu) in a two-step reaction: glutamate is first activated by ATP to form Glu-AMP and then transferred to the acceptor end of tRNA(Glu). This chain is Glutamate--tRNA ligase, found in Lactobacillus delbrueckii subsp. bulgaricus.